The chain runs to 126 residues: NADH-quinone oxidoreductase subunit A (126 aa).

3 helical membrane passes run 14–34 (FLYF…TSWF), 66–86 (FYLI…LYAW), and 96–116 (IGFV…FYLV).

Belongs to the complex I subunit 3 family. In terms of assembly, NDH-1 is composed of 13 different subunits. Subunits NuoA, H, J, K, L, M, N constitute the membrane sector of the complex.

The protein resides in the cell membrane. It carries out the reaction a quinone + NADH + 5 H(+)(in) = a quinol + NAD(+) + 4 H(+)(out). In terms of biological role, NDH-1 shuttles electrons from NADH, via FMN and iron-sulfur (Fe-S) centers, to quinones in the respiratory chain. The immediate electron acceptor for the enzyme in this species is believed to be ubiquinone. Couples the redox reaction to proton translocation (for every two electrons transferred, four hydrogen ions are translocated across the cytoplasmic membrane), and thus conserves the redox energy in a proton gradient. The protein is NADH-quinone oxidoreductase subunit A of Buchnera aphidicola subsp. Schizaphis graminum (strain Sg).